A 225-amino-acid polypeptide reads, in one-letter code: Orotidine 5'-phosphate decarboxylase (225 aa).

Residues D9, K31, D58 to T67, T115, R176, Q184, G204, and R205 each bind substrate. The active-site Proton donor is K60.

The protein belongs to the OMP decarboxylase family. Type 1 subfamily. As to quaternary structure, homodimer.

The enzyme catalyses orotidine 5'-phosphate + H(+) = UMP + CO2. The protein operates within pyrimidine metabolism; UMP biosynthesis via de novo pathway; UMP from orotate: step 2/2. Functionally, catalyzes the decarboxylation of orotidine 5'-monophosphate (OMP) to uridine 5'-monophosphate (UMP). In Wolbachia sp. subsp. Brugia malayi (strain TRS), this protein is Orotidine 5'-phosphate decarboxylase.